A 206-amino-acid chain; its full sequence is uncharacterized protein (206 aa).

The chain crosses the membrane as a helical span at residues 4–24 (LLVVIAVALFIAAIVVLVVAI).

Its subcellular location is the membrane. This is an uncharacterized protein from Mycobacterium tuberculosis (strain CDC 1551 / Oshkosh).